The sequence spans 133 residues: uncharacterized protein (133 aa).

Belongs to the mimivirus L15/L51/R83 family.

This is an uncharacterized protein from Acanthamoeba polyphaga (Amoeba).